The primary structure comprises 511 residues: MSTANVRVIVRVRPKSLRELSKSAEDLLSVDSHNKTVTITPPKHGLKHSRHKNRVNGPRTFAFDECFAPSAPESKNLSGQEDVYESTGPLLVKSILEGFNSCFITYGQKGTGKTYSVVGLRGQPGIIPHISESIFEEIDKLKKKSPNTTITVSISLAEIIEETPYDLLQPNVNSSHTPGETVFVQKDSLTGYHLHGLSEFEVGSAQEIDAFLRLAAKNIRTELSDISGVRKGHSVFSLVVQQRIIDPKTRHSLKKASRLQIIDLASFSKGSQRNESISSFESSSNNKSLSVLNRVIAALTSKKNDVLIPYKDSVLTTLLQDALGGNCRTIMLTCVSPCDFDDTFSALRYSEAARRIKNISNINCKEAYSTNNEGELDDILTTLESDREQLRRHEEHSQKLLKFIEEIRNDYEERIHALESQNSALKAHLRLAVDAYLNPLEFNFDDKNVKLKEFGSPNIAYKQELNSFQGELSSLFKDLKLVKSQLHDYPKPEVSDIDMDMESLRHDSLLD.

Residues 5–356 (NVRVIVRVRP…LRYSEAARRI (352 aa)) form the Kinesin motor domain. 107–114 (GQKGTGKT) lines the ATP pocket. Residues serine 278, serine 279, serine 284, and serine 456 each carry the phosphoserine modification. Positions 373–489 (EGELDDILTT…KLVKSQLHDY (117 aa)) form a coiled coil.

Belongs to the TRAFAC class myosin-kinesin ATPase superfamily. Kinesin family.

It is found in the cytoplasm. It localises to the cytoskeleton. This Schizosaccharomyces pombe (strain 972 / ATCC 24843) (Fission yeast) protein is Kinesin-like protein 8 (klp8).